The following is a 644-amino-acid chain: Exoribonuclease 2 (644 aa).

In terms of domain architecture, RNB spans 189 to 516 (REDLTALDFV…NHRLLKAVIK (328 aa)). An S1 motif domain is found at 561–643 (DTRFAAEIVD…ETRSIIARPV (83 aa)).

It belongs to the RNR ribonuclease family. RNase II subfamily.

The protein resides in the cytoplasm. It catalyses the reaction Exonucleolytic cleavage in the 3'- to 5'-direction to yield nucleoside 5'-phosphates.. Its function is as follows. Involved in mRNA degradation. Hydrolyzes single-stranded polyribonucleotides processively in the 3' to 5' direction. The protein is Exoribonuclease 2 of Shigella dysenteriae serotype 1 (strain Sd197).